A 76-amino-acid chain; its full sequence is Acyl carrier protein (76 aa).

Residues 1–76 (MSVEEKVKKI…DAIDYIAGKQ (76 aa)) form the Carrier domain. At Ser-36 the chain carries O-(pantetheine 4'-phosphoryl)serine.

The protein belongs to the acyl carrier protein (ACP) family. 4'-phosphopantetheine is transferred from CoA to a specific serine of apo-ACP by AcpS. This modification is essential for activity because fatty acids are bound in thioester linkage to the sulfhydryl of the prosthetic group.

It localises to the cytoplasm. It participates in lipid metabolism; fatty acid biosynthesis. In terms of biological role, carrier of the growing fatty acid chain in fatty acid biosynthesis. The chain is Acyl carrier protein from Oleidesulfovibrio alaskensis (strain ATCC BAA-1058 / DSM 17464 / G20) (Desulfovibrio alaskensis).